Reading from the N-terminus, the 95-residue chain is UPF0358 protein BCG9842_B1188 (95 aa).

Belongs to the UPF0358 family.

The sequence is that of UPF0358 protein BCG9842_B1188 from Bacillus cereus (strain G9842).